The following is a 127-amino-acid chain: Holo-[acyl-carrier-protein] synthase (127 aa).

Mg(2+)-binding residues include aspartate 9 and glutamate 58.

Belongs to the P-Pant transferase superfamily. AcpS family. The cofactor is Mg(2+).

Its subcellular location is the cytoplasm. It catalyses the reaction apo-[ACP] + CoA = holo-[ACP] + adenosine 3',5'-bisphosphate + H(+). Its function is as follows. Transfers the 4'-phosphopantetheine moiety from coenzyme A to a Ser of acyl-carrier-protein. This is Holo-[acyl-carrier-protein] synthase from Shewanella putrefaciens (strain CN-32 / ATCC BAA-453).